A 508-amino-acid polypeptide reads, in one-letter code: Photosystem II CP47 reaction center protein (508 aa).

A run of 6 helical transmembrane segments spans residues 21–36, 101–115, 140–156, 203–218, 237–252, and 457–472; these read AVHIMHTALVSGWAGS, IVFSGLCFLAAIWHW, GIHLFLAGVACFGFGAF, IAAGTLGILAGLFHLS, VLSSSIAAVFFAAFVV, and TFALLFFFGHIWHGAR.

This sequence belongs to the PsbB/PsbC family. PsbB subfamily. PSII is composed of 1 copy each of membrane proteins PsbA, PsbB, PsbC, PsbD, PsbE, PsbF, PsbH, PsbI, PsbJ, PsbK, PsbL, PsbM, PsbT, PsbX, PsbY, PsbZ, Psb30/Ycf12, at least 3 peripheral proteins of the oxygen-evolving complex and a large number of cofactors. It forms dimeric complexes. The cofactor is Binds multiple chlorophylls. PSII binds additional chlorophylls, carotenoids and specific lipids..

It localises to the plastid. The protein localises to the chloroplast thylakoid membrane. Functionally, one of the components of the core complex of photosystem II (PSII). It binds chlorophyll and helps catalyze the primary light-induced photochemical processes of PSII. PSII is a light-driven water:plastoquinone oxidoreductase, using light energy to abstract electrons from H(2)O, generating O(2) and a proton gradient subsequently used for ATP formation. This chain is Photosystem II CP47 reaction center protein, found in Triticum aestivum (Wheat).